A 98-amino-acid chain; its full sequence is Post-transcriptional regulator ComN (98 aa).

In terms of assembly, interacts directly with DivIVA.

The protein resides in the cytoplasm. Required for post-transcription initiation control of the comE operon. Promotes the accumulation of its target comE mRNA to septal and polar sites. This chain is Post-transcriptional regulator ComN (comN), found in Bacillus subtilis (strain 168).